A 224-amino-acid chain; its full sequence is Pyridoxal 5'-phosphate synthase subunit SNO1 (224 aa).

67-69 (GES) is a binding site for L-glutamine. The active-site Nucleophile is cysteine 100. L-glutamine contacts are provided by residues arginine 129 and 160–161 (IR). Active-site charge relay system residues include histidine 203 and glutamate 205.

This sequence belongs to the glutaminase PdxT/SNO family.

It carries out the reaction aldehydo-D-ribose 5-phosphate + D-glyceraldehyde 3-phosphate + L-glutamine = pyridoxal 5'-phosphate + L-glutamate + phosphate + 3 H2O + H(+). The catalysed reaction is L-glutamine + H2O = L-glutamate + NH4(+). It participates in cofactor biosynthesis; pyridoxal 5'-phosphate biosynthesis. Functionally, catalyzes the hydrolysis of glutamine to glutamate and ammonia as part of the biosynthesis of pyridoxal 5'-phosphate. The resulting ammonia molecule is channeled to the active site of a SNZ isoform. The sequence is that of Pyridoxal 5'-phosphate synthase subunit SNO1 (SNO1) from Saccharomyces cerevisiae (strain ATCC 204508 / S288c) (Baker's yeast).